Reading from the N-terminus, the 908-residue chain is Serine/threonine-protein kinase WARTS homolog (908 aa).

Residues 42-70 (EIRVGRHRAKLDEIRESLKAYEHEAGLLS) are a coiled coil. Composition is skewed to low complexity over residues 115–125 (VSSAAVSNSNS) and 168–181 (PSTT…TTTE). Disordered regions lie at residues 115–134 (VSSA…GGHK), 162–183 (MIRN…TEES), 203–225 (NNNA…DSSP), and 388–412 (KSRA…VSSP). Positions 392–404 (QPPPPQYNQPSEP) are enriched in pro residues. Residues 439–470 (YMEQHVERLLQQYKEREKRMKQLEKEMVSAQL) adopt a coiled-coil conformation. The Protein kinase domain occupies 502–807 (FTVISHIGVG…TAQVKNHPWF (306 aa)). Residues 508–516 (IGVGAFGKV) and K531 contribute to the ATP site. The active-site Proton acceptor is D625. The region spanning 808–874 (RGIDWVNLRK…RHFFDTDSVG (67 aa)) is the AGC-kinase C-terminal domain.

The protein belongs to the protein kinase superfamily. AGC Ser/Thr protein kinase family. As to quaternary structure, interacts (via N-terminus) with yap-1 (via WW domain). It depends on Mg(2+) as a cofactor. Expressed in muscles and epithelial tissues including pharynx, intestine and hypodermis. Expressed in vulval and spermathecal seam cells.

Its subcellular location is the cytoplasm. It is found in the apical cell membrane. The catalysed reaction is L-seryl-[protein] + ATP = O-phospho-L-seryl-[protein] + ADP + H(+). It catalyses the reaction L-threonyl-[protein] + ATP = O-phospho-L-threonyl-[protein] + ADP + H(+). In terms of biological role, phosphorylates yap-1 which may negatively regulate yap-1 nuclear localization. Plays an essential role in larval development. Regulates growth, the formation of gut granules, lifespan and cell and body sizes probably in synergy with the TGF-beta sma/mab pathway. Does not appear to regulate apoptosis and proliferation. In addition, may synergize with the TGF-beta daf-7 dauer pathway to regulate entry into the dauer stage. Maintains the cellular integrity of intestinal cells by regulating the localization of apical actin and junctional proteins. This Caenorhabditis elegans protein is Serine/threonine-protein kinase WARTS homolog.